Consider the following 103-residue polypeptide: Small ribosomal subunit protein uS10 (103 aa).

This sequence belongs to the universal ribosomal protein uS10 family. In terms of assembly, part of the 30S ribosomal subunit.

Its function is as follows. Involved in the binding of tRNA to the ribosomes. The polypeptide is Small ribosomal subunit protein uS10 (Shewanella pealeana (strain ATCC 700345 / ANG-SQ1)).